A 192-amino-acid polypeptide reads, in one-letter code: ADP-ribose glycohydrolase AF_1521 (192 aa).

In terms of domain architecture, Macro spans 1-192; it reads MEVLFEAKVG…VALKVFERSL (192 aa). Substrate contacts are provided by residues 19 to 21, 32 to 34, 39 to 44, and 140 to 146; these read GDI, AAN, HGGGVA, and VSAGIYG.

It catalyses the reaction 5-O-(ADP-D-ribosyl)-L-glutamyl-[protein] + H2O = L-glutamyl-[protein] + ADP-D-ribose + H(+). It carries out the reaction 4-O-(ADP-D-ribosyl)-L-aspartyl-[protein] + H2O = L-aspartyl-[protein] + ADP-D-ribose + H(+). The enzyme catalyses alpha-NAD(+) + H2O = ADP-D-ribose + nicotinamide + H(+). In terms of biological role, removes ADP-ribose from aspartate and glutamate residues in proteins bearing a single ADP-ribose moiety. Inactive towards proteins bearing poly-ADP-ribose. Catalyzes removal of a phosphate group from ADP-ribose 1''-phosphate (Appr1p), but with low efficiency. This chain is ADP-ribose glycohydrolase AF_1521, found in Archaeoglobus fulgidus (strain ATCC 49558 / DSM 4304 / JCM 9628 / NBRC 100126 / VC-16).